A 540-amino-acid chain; its full sequence is 2-isopropylmalate synthase (540 aa).

A Pyruvate carboxyltransferase domain is found at 8–269 (VLIFDTTLRD…YFNPFFGREP (262 aa)). 4 residues coordinate Mn(2+): aspartate 17, histidine 208, histidine 210, and asparagine 244. The tract at residues 408–540 (QLRLVQVSCG…AVLADLRSGI (133 aa)) is regulatory domain.

It belongs to the alpha-IPM synthase/homocitrate synthase family. LeuA type 1 subfamily. Homodimer. The cofactor is Mn(2+).

It localises to the cytoplasm. The enzyme catalyses 3-methyl-2-oxobutanoate + acetyl-CoA + H2O = (2S)-2-isopropylmalate + CoA + H(+). Its pathway is amino-acid biosynthesis; L-leucine biosynthesis; L-leucine from 3-methyl-2-oxobutanoate: step 1/4. In terms of biological role, catalyzes the condensation of the acetyl group of acetyl-CoA with 3-methyl-2-oxobutanoate (2-ketoisovalerate) to form 3-carboxy-3-hydroxy-4-methylpentanoate (2-isopropylmalate). This is 2-isopropylmalate synthase from Prochlorococcus marinus (strain MIT 9313).